Consider the following 468-residue polypeptide: Pentatricopeptide repeat-containing protein At5g46680 (468 aa).

PPR repeat units follow at residues 12 to 46 (STKL…GVLP), 47 to 81 (DVIT…GIEP), 82 to 116 (DVTT…GLSP), 117 to 152 (DMWS…GLVP), 153 to 183 (GIDT…LKSR), 187 to 221 (ELMT…GYTP), 222 to 256 (NAVT…GYTF), 257 to 291 (DGFA…GTRS), 293 to 327 (DIVS…GLKP), 328 to 362 (DDYT…GMQP), 363 to 393 (SVVT…MEVR), and 394 to 428 (DEFT…GMKI).

Belongs to the PPR family. P subfamily.

The polypeptide is Pentatricopeptide repeat-containing protein At5g46680 (Arabidopsis thaliana (Mouse-ear cress)).